A 224-amino-acid chain; its full sequence is MGELFTFFGLISHDKTFIYMTHMLLAAGIALMLVKMAMSNLKVVPTGTQNVMEAYISGVLKMGTDVMGQEAARRYLPLVATIGLFVGIANLIGVVPGFEAPTAFLEFAFTLALSVFIYYNYEGIRRQGVVKYFKHFLGPVWWLYWLMFPIEIVSHFSRLVSLSFRLFGNVKGDDMFLMVILMLAPWVLPMIPYALLTFMAFLQAFIFMMLTYVYLGSAIAVEEH.

6 helical membrane passes run 17–37 (FIYM…VKMA), 78–98 (LVAT…VPGF), 104–124 (FLEF…YEGI), 136–156 (FLGP…VSHF), 176–196 (FLMV…YALL), and 201–221 (FLQA…AIAV).

It belongs to the ATPase A chain family. In terms of assembly, F-type ATPases have 2 components, CF(1) - the catalytic core - and CF(0) - the membrane proton channel. CF(1) has five subunits: alpha(3), beta(3), gamma(1), delta(1), epsilon(1). CF(0) has three main subunits: a(1), b(2) and c(9-12). The alpha and beta chains form an alternating ring which encloses part of the gamma chain. CF(1) is attached to CF(0) by a central stalk formed by the gamma and epsilon chains, while a peripheral stalk is formed by the delta and b chains.

It localises to the cell inner membrane. Functionally, key component of the proton channel; it plays a direct role in the translocation of protons across the membrane. This Sulfurimonas denitrificans (strain ATCC 33889 / DSM 1251) (Thiomicrospira denitrificans (strain ATCC 33889 / DSM 1251)) protein is ATP synthase subunit a.